A 778-amino-acid polypeptide reads, in one-letter code: Ral guanine nucleotide dissociation stimulator-like 2 (778 aa).

Low complexity predominate over residues 1-15 (MLPRPLRLLLDTTPP). Residues 1–59 (MLPRPLRLLLDTTPPGGVVLSSFRSRDPEEGGDPGGRAVGGGQEEEDEEEEEASVSVWD) are disordered. Residues 33–42 (DPGGRAVGGG) show a composition bias toward gly residues. The span at 43–59 (QEEEDEEEEEASVSVWD) shows a compositional bias: acidic residues. One can recognise an N-terminal Ras-GEF domain in the interval 88 to 212 (SSRRLRAGTL…GSADLIRNLR (125 aa)). The region spanning 243-513 (LADHLAEQLT…HRVSCEVEPP (271 aa)) is the Ras-GEF domain. 4 disordered regions span residues 503 to 524 (SHRV…ARTP), 541 to 564 (GGPT…GTPA), 581 to 647 (SLDS…GPGS), and 735 to 769 (RRPS…IKAT). The segment covering 581–592 (SLDSALESSPSL) has biased composition (low complexity). The segment covering 620–632 (CGSPLSGNTGEGT) has biased composition (polar residues). Residues 649–736 (DCRIIRVQME…HDFLLRQRRR (88 aa)) enclose the Ras-associating domain. The span at 738 to 756 (SAATPGSHSGPSASGTPPS) shows a compositional bias: low complexity.

As to quaternary structure, interacts with SAMD9.

Probable guanine nucleotide exchange factor. Putative effector of Ras and/or Rap. Associates with the GTP-bound form of Rap 1A and H-Ras in vitro. This is Ral guanine nucleotide dissociation stimulator-like 2 (Rgl2) from Mus musculus (Mouse).